The primary structure comprises 1235 residues: Topoisomerase 1-associated factor 1 (1235 aa).

4 disordered regions span residues 327 to 357 (RERK…GPPV), 584 to 610 (GEEA…HAER), 812 to 841 (EGAA…TEAR), and 897 to 1235 (EFSP…SDEE). Residues 585–603 (EEAEDVGVPEDNDADDSGD) show a composition bias toward acidic residues. The span at 929–947 (DDDEEEIRGFLGDDDDEDF) shows a compositional bias: acidic residues. Residues 964-973 (QKKRQRKRRR) show a composition bias toward basic residues. The span at 977-986 (SGDEEDEGVS) shows a compositional bias: acidic residues. Over residues 999–1044 (EKELEKIRKIKSEMYVHASDDETDDERDREFFERERKRQETKDSKF) the composition is skewed to basic and acidic residues. Acidic residues-rich tracts occupy residues 1070–1081 (VLDDEPESDESE) and 1099–1118 (SEEE…SDEE). Residues 1124-1150 (AKSKTSKRKAAVPSKRPARRPGTAKKR) are compositionally biased toward basic residues. Residues 1156–1170 (SDNDEDEDEEEDAMD) show a composition bias toward acidic residues. Residues 1193–1202 (LGRRIDKMAM) are compositionally biased toward basic and acidic residues. The span at 1203–1212 (DDGDEDEDDQ) shows a compositional bias: acidic residues.

The protein belongs to the timeless family. Component of the fork protection complex (FPC) consisting of tof-1 and csm-3.

Its subcellular location is the nucleus. Forms a fork protection complex (FPC) with csm-3 and which is required for chromosome segregation during meiosis and DNA damage repair. FPC coordinates leading and lagging strand synthesis and moves with the replication fork. FPC stabilizes replication forks in a configuration that is recognized by replication checkpoint sensors. The protein is Topoisomerase 1-associated factor 1 (tof-1) of Neurospora crassa (strain ATCC 24698 / 74-OR23-1A / CBS 708.71 / DSM 1257 / FGSC 987).